The following is a 353-amino-acid chain: Photosystem II D2 protein (353 aa).

Threonine 2 is modified (N-acetylthreonine). Phosphothreonine is present on threonine 2. The chain crosses the membrane as a helical span at residues 41-61 (CAYFAVGGWFTGTTFVTSWYT). Histidine 118 lines the chlorophyll a pocket. Residues 125–141 (GFMLRQFELARSVQLRP) traverse the membrane as a helical segment. Residues glutamine 130 and asparagine 143 each contribute to the pheophytin a site. The chain crosses the membrane as a helical span at residues 153–166 (VFVSVFLIYPLGQS). Histidine 198 contributes to the chlorophyll a binding site. Residues 208 to 228 (AALLCAIHGATVENTLFEDGD) form a helical membrane-spanning segment. Residues histidine 215 and phenylalanine 262 each coordinate a plastoquinone. Fe cation is bound at residue histidine 215. A Fe cation-binding site is contributed by histidine 269. Residues 279 to 295 (GLWMSALGVVGLALNLR) form a helical membrane-spanning segment.

Belongs to the reaction center PufL/M/PsbA/D family. PSII is composed of 1 copy each of membrane proteins PsbA, PsbB, PsbC, PsbD, PsbE, PsbF, PsbH, PsbI, PsbJ, PsbK, PsbL, PsbM, PsbT, PsbX, PsbY, PsbZ, Psb30/Ycf12, at least 3 peripheral proteins of the oxygen-evolving complex and a large number of cofactors. It forms dimeric complexes. The cofactor is The D1/D2 heterodimer binds P680, chlorophylls that are the primary electron donor of PSII, and subsequent electron acceptors. It shares a non-heme iron and each subunit binds pheophytin, quinone, additional chlorophylls, carotenoids and lipids. There is also a Cl(-1) ion associated with D1 and D2, which is required for oxygen evolution. The PSII complex binds additional chlorophylls, carotenoids and specific lipids..

The protein localises to the plastid. The protein resides in the chloroplast thylakoid membrane. The enzyme catalyses 2 a plastoquinone + 4 hnu + 2 H2O = 2 a plastoquinol + O2. Functionally, photosystem II (PSII) is a light-driven water:plastoquinone oxidoreductase that uses light energy to abstract electrons from H(2)O, generating O(2) and a proton gradient subsequently used for ATP formation. It consists of a core antenna complex that captures photons, and an electron transfer chain that converts photonic excitation into a charge separation. The D1/D2 (PsbA/PsbD) reaction center heterodimer binds P680, the primary electron donor of PSII as well as several subsequent electron acceptors. D2 is needed for assembly of a stable PSII complex. The chain is Photosystem II D2 protein from Atropa belladonna (Belladonna).